A 384-amino-acid chain; its full sequence is Nodal homolog 2-B (384 aa).

The signal sequence occupies residues 1–18; sequence MASLGAILLFAIASLMHG. A propeptide spanning residues 19-283 is cleaved from the precursor; it reads RPIHSDRKGA…RVADARRHRR (265 aa). Residues asparagine 71, asparagine 173, and asparagine 344 are each glycosylated (N-linked (GlcNAc...) asparagine). A disulfide bridge links cysteine 306 with cysteine 372.

This sequence belongs to the TGF-beta family. As to quaternary structure, homodimer; disulfide-linked. Forms heterodimers with the TGF-beta family member derriere. Interacts with tsku; enhances nodal2 activity.

It is found in the secreted. Functionally, cooperation and regulatory loops of multiple nodals are essential for mesendoderm patterning in early embryos. Essential for mesoderm formation and axial patterning during embryonic development. Activates the activin-like signaling pathway to induce dorsal and ventral mesoderm in animal cap ectoderm. In addition, also dorsalizes ventral marginal zone (VMZ) tissues during gastrulation. Induces muscle actin. Appears to act as both a short-range and long-range morphogen. The unprocessed protein inhibits bmp- and wnt-signaling. The sequence is that of Nodal homolog 2-B (nodal2-b) from Xenopus laevis (African clawed frog).